Here is a 160-residue protein sequence, read N- to C-terminus: Transcription elongation factor GreA (160 aa).

Residues 3–84 (SIVNDKILLT…SKAKIIKADL (82 aa)) are a coiled coil.

It belongs to the GreA/GreB family.

In terms of biological role, necessary for efficient RNA polymerase transcription elongation past template-encoded arresting sites. The arresting sites in DNA have the property of trapping a certain fraction of elongating RNA polymerases that pass through, resulting in locked ternary complexes. Cleavage of the nascent transcript by cleavage factors such as GreA or GreB allows the resumption of elongation from the new 3'terminus. GreA releases sequences of 2 to 3 nucleotides. In Mesomycoplasma hyopneumoniae (strain 7448) (Mycoplasma hyopneumoniae), this protein is Transcription elongation factor GreA.